The sequence spans 216 residues: ATP phosphoribosyltransferase (216 aa).

The protein belongs to the ATP phosphoribosyltransferase family. Short subfamily. In terms of assembly, heteromultimer composed of HisG and HisZ subunits.

The protein localises to the cytoplasm. The catalysed reaction is 1-(5-phospho-beta-D-ribosyl)-ATP + diphosphate = 5-phospho-alpha-D-ribose 1-diphosphate + ATP. It participates in amino-acid biosynthesis; L-histidine biosynthesis; L-histidine from 5-phospho-alpha-D-ribose 1-diphosphate: step 1/9. Its function is as follows. Catalyzes the condensation of ATP and 5-phosphoribose 1-diphosphate to form N'-(5'-phosphoribosyl)-ATP (PR-ATP). Has a crucial role in the pathway because the rate of histidine biosynthesis seems to be controlled primarily by regulation of HisG enzymatic activity. In Chromohalobacter salexigens (strain ATCC BAA-138 / DSM 3043 / CIP 106854 / NCIMB 13768 / 1H11), this protein is ATP phosphoribosyltransferase.